Reading from the N-terminus, the 155-residue chain is MAEGEITTFSALTERFNLPPGNYKKPKLLYCSNGGHFLRILPDGTVDGTRDRSDQHIQLQLSAESAGEVYIKGTETGQYLAMDTDGLLYGSQTPNEECLFLERLEENHYNTYTSKKHAEKNWFVGLKKNGSCKRGPRTHYGQKAILFLPLPVSSD.

Position 2 is an N-acetylalanine (Ala2). Positions 2-15 (AEGEITTFSALTER) are excised as a propeptide. A heparin-binding site is contributed by Asn33. The tract at residues 127-143 (KKNGSCKRGPRTHYGQK) is heparin-binding.

It belongs to the heparin-binding growth factors family. In terms of assembly, monomer. Homodimer. Interacts with FGFR1, FGFR2, FGFR3 and FGFR4. Affinity between fibroblast growth factors (FGFs) and their receptors is increased by heparan sulfate glycosaminoglycans that function as coreceptors. Found in a complex with FGFBP1, FGF1 and FGF2. Interacts with FGFBP1. Part of a Cu(2+)-dependent multiprotein aggregate containing FGF1, S100A13 and SYT1. Interacts with SYT1. Interacts with S100A13. Interacts with LRRC59. Interacts with CSNKA, CSNKB and FIBP. While binding with LRRC59, CSNKA and FIBP seem mutually exclusive, CSNKB and FIBP may cooperatively interact with FGF1. Forms a ternary complex with FGFR1 and ITGAV:ITGB3 and induces the recruitment of PTPN11 to the complex. Post-translationally, in the nucleus, phosphorylated by PKC/PRKCD.

It localises to the secreted. The protein localises to the cytoplasm. Its subcellular location is the cell cortex. It is found in the cytosol. The protein resides in the nucleus. In terms of biological role, plays an important role in the regulation of cell survival, cell division, angiogenesis, cell differentiation and cell migration. Functions as a potent mitogen in vitro. Acts as a ligand for FGFR1 and integrins. Binds to FGFR1 in the presence of heparin leading to FGFR1 dimerization and activation via sequential autophosphorylation on tyrosine residues which act as docking sites for interacting proteins, leading to the activation of several signaling cascades. Binds to integrin ITGAV:ITGB3. Its binding to integrin, subsequent ternary complex formation with integrin and FGFR1, and the recruitment of PTPN11 to the complex are essential for FGF1 signaling. Induces the phosphorylation and activation of FGFR1, FRS2, MAPK3/ERK1, MAPK1/ERK2 and AKT1. Can induce angiogenesis. The sequence is that of Fibroblast growth factor 1 (FGF1) from Mesocricetus auratus (Golden hamster).